The sequence spans 884 residues: Bifunctional heparan sulfate N-deacetylase/N-sulfotransferase 2 (884 aa).

Topologically, residues Met-1–Arg-18 are cytoplasmic. The chain crosses the membrane as a helical; Signal-anchor for type II membrane protein span at residues Leu-19–Ser-39. Residues Thr-40–Gly-884 lie on the Lumenal side of the membrane. Residues Ser-41 to Glu-598 are heparan sulfate N-deacetylase 2. The tract at residues Pro-49–Ala-82 is disordered. Residues Pro-66 to Pro-79 show a composition bias toward pro residues. Residues Asn-351 and Asn-401 are each glycosylated (N-linked (GlcNAc...) asparagine). The interval Lys-599 to Gly-884 is heparan sulfate N-sulfotransferase 2. Lys-614 (for sulfotransferase activity) is an active-site residue. Residue Lys-614 to Thr-618 coordinates 3'-phosphoadenylyl sulfate. N-linked (GlcNAc...) asparagine glycosylation is present at Asn-667. Ser-712 serves as a coordination point for 3'-phosphoadenylyl sulfate. N-linked (GlcNAc...) asparagine glycosylation is found at Asn-727 and Asn-803. Residues Cys-818 and Cys-828 are joined by a disulfide bond. Lys-833 to Tyr-837 is a binding site for 3'-phosphoadenylyl sulfate.

This sequence belongs to the sulfotransferase 1 family. NDST subfamily. In terms of assembly, monomer.

Its subcellular location is the golgi apparatus membrane. It carries out the reaction alpha-D-glucosaminyl-[heparan sulfate](n) + 3'-phosphoadenylyl sulfate = N-sulfo-alpha-D-glucosaminyl-[heparan sulfate](n) + adenosine 3',5'-bisphosphate + 2 H(+). It participates in glycan metabolism; heparan sulfate biosynthesis. Its pathway is glycan metabolism; heparin biosynthesis. In terms of biological role, essential bifunctional enzyme that catalyzes both the N-deacetylation and the N-sulfation of glucosamine (GlcNAc) of the glycosaminoglycan in heparan sulfate. Modifies the GlcNAc-GlcA disaccharide repeating sugar backbone to make N-sulfated heparosan, a prerequisite substrate for later modifications in heparin biosynthesis. Plays a role in determining the extent and pattern of sulfation of heparan sulfate. Required for the exosomal release of SDCBP, CD63 and syndecan. The sequence is that of Bifunctional heparan sulfate N-deacetylase/N-sulfotransferase 2 (NDST2) from Bos taurus (Bovine).